A 103-amino-acid chain; its full sequence is ATP synthase subunit c (103 aa).

A run of 3 helical transmembrane segments spans residues 3–23 (FLAL…VSGL), 30–50 (SIAG…IGMG), and 74–94 (MFIA…LALI).

It belongs to the ATPase C chain family. As to quaternary structure, F-type ATPases have 2 components, F(1) - the catalytic core - and F(0) - the membrane proton channel. F(1) has five subunits: alpha(3), beta(3), gamma(1), delta(1), epsilon(1). F(0) has three main subunits: a(1), b(2) and c(10-14). The alpha and beta chains form an alternating ring which encloses part of the gamma chain. F(1) is attached to F(0) by a central stalk formed by the gamma and epsilon chains, while a peripheral stalk is formed by the delta and b chains.

The protein resides in the cell inner membrane. In terms of biological role, f(1)F(0) ATP synthase produces ATP from ADP in the presence of a proton or sodium gradient. F-type ATPases consist of two structural domains, F(1) containing the extramembraneous catalytic core and F(0) containing the membrane proton channel, linked together by a central stalk and a peripheral stalk. During catalysis, ATP synthesis in the catalytic domain of F(1) is coupled via a rotary mechanism of the central stalk subunits to proton translocation. Functionally, key component of the F(0) channel; it plays a direct role in translocation across the membrane. A homomeric c-ring of between 10-14 subunits forms the central stalk rotor element with the F(1) delta and epsilon subunits. This Helicobacter hepaticus (strain ATCC 51449 / 3B1) protein is ATP synthase subunit c.